A 530-amino-acid polypeptide reads, in one-letter code: Autoinducer-2 kinase (530 aa).

Belongs to the FGGY kinase family.

The protein localises to the cytoplasm. The enzyme catalyses (S)-4,5-dihydroxypentane-2,3-dione + ATP = (2S)-2-hydroxy-3,4-dioxopentyl phosphate + ADP + H(+). Functionally, catalyzes the phosphorylation of autoinducer-2 (AI-2) to phospho-AI-2, which subsequently inactivates the transcriptional regulator LsrR and leads to the transcription of the lsr operon. Phosphorylates the ring-open form of (S)-4,5-dihydroxypentane-2,3-dione (DPD), which is the precursor to all AI-2 signaling molecules, at the C5 position. This is Autoinducer-2 kinase from Yersinia pseudotuberculosis serotype O:1b (strain IP 31758).